Reading from the N-terminus, the 147-residue chain is Ribonuclease 4 (147 aa).

The first 28 residues, 1-28, serve as a signal peptide directing secretion; sequence MALQRTHSLLLLLLLTLLGLGLVQPSYG. Glutamine 29 carries the post-translational modification Pyrrolidone carboxylic acid. DUMP contacts are provided by arginine 35, histidine 40, lysine 68, asparagine 71, and threonine 72. The active-site Proton acceptor is histidine 40. Intrachain disulfides connect cysteine 53–cysteine 109, cysteine 67–cysteine 120, cysteine 85–cysteine 135, and cysteine 92–cysteine 99. Histidine 144 (proton donor) is an active-site residue. Residue phenylalanine 145 coordinates dUMP.

It belongs to the pancreatic ribonuclease family.

It localises to the secreted. Its function is as follows. Cleaves preferentially after uridine bases. Has antimicrobial activity against uropathogenic E.coli (UPEC). Probably contributes to urinary tract sterility. The sequence is that of Ribonuclease 4 (RNASE4) from Pan troglodytes (Chimpanzee).